We begin with the raw amino-acid sequence, 862 residues long: Linoleate 9S-lipoxygenase 1 (862 aa).

The PLAT domain occupies 44–171; that stretch reads FGAATDIVGG…SYKRDRIFFA (128 aa). In terms of domain architecture, Lipoxygenase spans 174–862; sequence TYLPNETPAS…FRGIPNSISI (689 aa). The disordered stretch occupies residues 225 to 257; sequence KNLARTTLGGSSDFPYPRRGRTGRKSTRKDPKC. Residues 242 to 251 show a composition bias toward basic residues; sequence RRGRTGRKST. Fe cation contacts are provided by His-522, His-527, His-713, Asn-717, and Ile-862.

It belongs to the lipoxygenase family. Monomer. Fe cation is required as a cofactor.

It localises to the cytoplasm. The catalysed reaction is (9Z,12Z)-octadecadienoate + O2 = (13S)-hydroperoxy-(9Z,11E)-octadecadienoate. It catalyses the reaction (9Z,12Z,15Z)-octadecatrienoate + O2 = (13S)-hydroperoxy-(9Z,11E,15Z)-octadecatrienoate. The enzyme catalyses (9Z,12Z)-octadecadienoate + O2 = (9S)-hydroperoxy-(10E,12Z)-octadecadienoate. The protein operates within lipid metabolism; oxylipin biosynthesis. Its function is as follows. Plant lipoxygenase may be involved in a number of diverse aspects of plant physiology including growth and development, pest resistance, and senescence or responses to wounding. It catalyzes the hydroperoxidation of lipids containing a cis,cis-1,4-pentadiene structure. The chain is Linoleate 9S-lipoxygenase 1 (LOXA) from Phaseolus vulgaris (Kidney bean).